The chain runs to 176 residues: Adenine phosphoribosyltransferase (176 aa).

This sequence belongs to the purine/pyrimidine phosphoribosyltransferase family. As to quaternary structure, homodimer.

Its subcellular location is the cytoplasm. The enzyme catalyses AMP + diphosphate = 5-phospho-alpha-D-ribose 1-diphosphate + adenine. Its pathway is purine metabolism; AMP biosynthesis via salvage pathway; AMP from adenine: step 1/1. In terms of biological role, catalyzes a salvage reaction resulting in the formation of AMP, that is energically less costly than de novo synthesis. This is Adenine phosphoribosyltransferase from Bacteroides thetaiotaomicron (strain ATCC 29148 / DSM 2079 / JCM 5827 / CCUG 10774 / NCTC 10582 / VPI-5482 / E50).